The following is a 417-amino-acid chain: Glutamyl-tRNA reductase (417 aa).

Substrate-binding positions include 49-52 (TCNR), Ser105, 110-112 (ETQ), and Gln116. The active-site Nucleophile is the Cys50. 185–190 (GAGEMI) serves as a coordination point for NADP(+).

This sequence belongs to the glutamyl-tRNA reductase family. In terms of assembly, homodimer.

The enzyme catalyses (S)-4-amino-5-oxopentanoate + tRNA(Glu) + NADP(+) = L-glutamyl-tRNA(Glu) + NADPH + H(+). It participates in porphyrin-containing compound metabolism; protoporphyrin-IX biosynthesis; 5-aminolevulinate from L-glutamyl-tRNA(Glu): step 1/2. Catalyzes the NADPH-dependent reduction of glutamyl-tRNA(Glu) to glutamate 1-semialdehyde (GSA). This chain is Glutamyl-tRNA reductase, found in Chromobacterium violaceum (strain ATCC 12472 / DSM 30191 / JCM 1249 / CCUG 213 / NBRC 12614 / NCIMB 9131 / NCTC 9757 / MK).